A 423-amino-acid polypeptide reads, in one-letter code: Phosphoribosylamine--glycine ligase (423 aa).

Residues 107-312 (KAFADRYGLP…LVPYLVACAN (206 aa)) form the ATP-grasp domain. 133-193 (LELFEPPYVI…EEFLEGEIGS (61 aa)) lines the ATP pocket. Mg(2+) is bound by residues Glu-270, Glu-282, and Asn-284. Positions 270, 282, and 284 each coordinate Mn(2+).

It belongs to the GARS family. It depends on Mg(2+) as a cofactor. Requires Mn(2+) as cofactor.

It carries out the reaction 5-phospho-beta-D-ribosylamine + glycine + ATP = N(1)-(5-phospho-beta-D-ribosyl)glycinamide + ADP + phosphate + H(+). It functions in the pathway purine metabolism; IMP biosynthesis via de novo pathway; N(1)-(5-phospho-D-ribosyl)glycinamide from 5-phospho-alpha-D-ribose 1-diphosphate: step 2/2. This is Phosphoribosylamine--glycine ligase from Phenylobacterium zucineum (strain HLK1).